The primary structure comprises 277 residues: Myelin proteolipid protein (277 aa).

The Cytoplasmic portion of the chain corresponds to 1–10; the sequence is MGLLECCARC. S-palmitoyl cysteine attachment occurs at residues Cys-6, Cys-7, and Cys-10. Residues 11 to 36 traverse the membrane as a helical segment; that stretch reads LVGAPFASLVATGLCFFGVALFCGCG. Topologically, residues 37–59 are extracellular; it reads HEALTGTEKLIETYFSKNYQDYE. A helical transmembrane segment spans residues 60–88; that stretch reads YLINVIHAFQYVIYGTASFFFLYGALLLA. Residues 89 to 151 lie on the Cytoplasmic side of the membrane; the sequence is EGFYTTGAVR…LGKWLGHPDK (63 aa). Cys-109 is lipidated: S-palmitoyl cysteine. Ser-114 bears the Phosphoserine mark. Phosphothreonine is present on residues Thr-116 and Thr-118. Residues Cys-139 and Cys-141 are each lipidated (S-palmitoyl cysteine). A helical transmembrane segment spans residues 152 to 178; the sequence is FVGITYALTVVWLLVFACSAVPVYIYF. Residues 179 to 238 are Extracellular-facing; it reads NTWTTCQSIAFPSKTSASIGTLCADARMYGVLPWNAFPGKVCGSNLLSICKTAEFQMTFH. Intrachain disulfides connect Cys-184-Cys-228 and Cys-201-Cys-220. Thr-199 carries the O-palmitoyl threonine lipid modification. A helical membrane pass occupies residues 239 to 268; that stretch reads LFIAAFVGAAATLVSLLTFMIAATYNFAVL. Residues 269-277 are Cytoplasmic-facing; it reads KLMGRGTKF.

It belongs to the myelin proteolipid protein family. As to quaternary structure, interacts with MAL.

The protein localises to the cell membrane. Its subcellular location is the myelin membrane. Its function is as follows. This is the major myelin protein from the central nervous system. It plays an important role in the formation or maintenance of the multilamellar structure of myelin. The polypeptide is Myelin proteolipid protein (PLP1) (Oryctolagus cuniculus (Rabbit)).